Reading from the N-terminus, the 83-residue chain is Small ribosomal subunit protein bS16 (83 aa).

This sequence belongs to the bacterial ribosomal protein bS16 family.

This chain is Small ribosomal subunit protein bS16, found in Pseudomonas aeruginosa (strain UCBPP-PA14).